The primary structure comprises 295 residues: Elongation factor Ts (295 aa).

The interval 79 to 82 is involved in Mg(2+) ion dislocation from EF-Tu; the sequence is TDFV.

Belongs to the EF-Ts family.

It localises to the cytoplasm. In terms of biological role, associates with the EF-Tu.GDP complex and induces the exchange of GDP to GTP. It remains bound to the aminoacyl-tRNA.EF-Tu.GTP complex up to the GTP hydrolysis stage on the ribosome. The polypeptide is Elongation factor Ts (Mycoplasma capricolum subsp. capricolum (strain California kid / ATCC 27343 / NCTC 10154)).